A 526-amino-acid polypeptide reads, in one-letter code: Plant intracellular Ras-group-related LRR protein 5 (526 aa).

LRR repeat units follow at residues 229–252 (LSSL…IGGL), 253–275 (ISLT…IGDL), 276–297 (LNLV…SFNR), 298–321 (LIHL…IGSL), 323–344 (SLKK…ISGC), 346–367 (SMEE…VGKL), 368–390 (STLE…MSSM), 391–414 (ANLK…CYAK), 416–437 (LVKL…LIGN), 438–463 (LEKL…TLSN), and 465–484 (RVLQ…ITEK). The GVYW; degenerate signature appears at 485–492 (GAQAVVQY).

This sequence belongs to the SHOC2 family. As to expression, widely expressed but preferentially in roots.

Leucine-rich repeat protein that likely mediates protein interactions, possibly in the context of signal transduction. This chain is Plant intracellular Ras-group-related LRR protein 5 (PIRL5), found in Arabidopsis thaliana (Mouse-ear cress).